Reading from the N-terminus, the 224-residue chain is uncharacterized protein (224 aa).

The span at 44 to 139 (TSPPIVPLPT…PSPPPSPSPL (96 aa)) shows a compositional bias: pro residues. Residues 44-145 (TSPPIVPLPT…PSPLGEPMYY (102 aa)) are disordered.

This is an uncharacterized protein from Lepidoptera (butterflies and moths).